A 156-amino-acid chain; its full sequence is 3-dehydroquinate dehydratase (156 aa).

Tyrosine 24 acts as the Proton acceptor in catalysis. Residues asparagine 76, histidine 82, and aspartate 89 each contribute to the substrate site. Residue histidine 102 is the Proton donor of the active site. Substrate is bound by residues 103-104 (IS) and arginine 113.

It belongs to the type-II 3-dehydroquinase family. Homododecamer.

The catalysed reaction is 3-dehydroquinate = 3-dehydroshikimate + H2O. It functions in the pathway metabolic intermediate biosynthesis; chorismate biosynthesis; chorismate from D-erythrose 4-phosphate and phosphoenolpyruvate: step 3/7. In terms of biological role, catalyzes a trans-dehydration via an enolate intermediate. This Nitrobacter winogradskyi (strain ATCC 25391 / DSM 10237 / CIP 104748 / NCIMB 11846 / Nb-255) protein is 3-dehydroquinate dehydratase.